The following is an 802-amino-acid chain: Phenylalanine--tRNA ligase beta subunit (802 aa).

One can recognise a tRNA-binding domain in the interval 39–150; sequence AKALKPFTIA…ADAPIGAAYA (112 aa). Residues 400–475 form the B5 domain; that stretch reads GDDRVIDFPV…RIYGVDKVPM (76 aa). Mg(2+) contacts are provided by D453, D459, E462, and E463. Residues 708–801 form the FDX-ACB domain; that stretch reads SAFQPVSRDF…VTKKTGGTLR (94 aa).

The protein belongs to the phenylalanyl-tRNA synthetase beta subunit family. Type 1 subfamily. As to quaternary structure, tetramer of two alpha and two beta subunits. Mg(2+) serves as cofactor.

It is found in the cytoplasm. The catalysed reaction is tRNA(Phe) + L-phenylalanine + ATP = L-phenylalanyl-tRNA(Phe) + AMP + diphosphate + H(+). The chain is Phenylalanine--tRNA ligase beta subunit from Bradyrhizobium diazoefficiens (strain JCM 10833 / BCRC 13528 / IAM 13628 / NBRC 14792 / USDA 110).